A 193-amino-acid chain; its full sequence is Xanthine phosphoribosyltransferase (193 aa).

Residues leucine 20 and threonine 27 each contribute to the xanthine site. Residue 128–132 coordinates 5-phospho-alpha-D-ribose 1-diphosphate; that stretch reads ANGQA. Residue lysine 156 participates in xanthine binding.

It belongs to the purine/pyrimidine phosphoribosyltransferase family. Xpt subfamily. As to quaternary structure, homodimer.

The protein resides in the cytoplasm. The catalysed reaction is XMP + diphosphate = xanthine + 5-phospho-alpha-D-ribose 1-diphosphate. It participates in purine metabolism; XMP biosynthesis via salvage pathway; XMP from xanthine: step 1/1. Functionally, converts the preformed base xanthine, a product of nucleic acid breakdown, to xanthosine 5'-monophosphate (XMP), so it can be reused for RNA or DNA synthesis. This chain is Xanthine phosphoribosyltransferase, found in Streptococcus pneumoniae serotype 2 (strain D39 / NCTC 7466).